The chain runs to 294 residues: Nucleoside-specific channel-forming protein Tsx (294 aa).

A signal peptide spans 1 to 22 (MKKTLLAAGAVLALSSSFTVNA).

Belongs to the nucleoside-specific channel-forming outer membrane porin (Tsx) (TC 1.B.10) family.

The protein resides in the cell outer membrane. In terms of biological role, functions as a substrate-specific channel for nucleosides and deoxynucleosides. In Escherichia coli O157:H7, this protein is Nucleoside-specific channel-forming protein Tsx (tsx).